Consider the following 164-residue polypeptide: Probable ubiquitin-conjugating enzyme E2 7 (164 aa).

In terms of domain architecture, UBC core spans 3–163; that stretch reads QSSLLLKKQL…VAQCVRRSQE (161 aa). The Glycyl thioester intermediate role is filled by C88.

The protein belongs to the ubiquitin-conjugating enzyme family.

It catalyses the reaction S-ubiquitinyl-[E1 ubiquitin-activating enzyme]-L-cysteine + [E2 ubiquitin-conjugating enzyme]-L-cysteine = [E1 ubiquitin-activating enzyme]-L-cysteine + S-ubiquitinyl-[E2 ubiquitin-conjugating enzyme]-L-cysteine.. It functions in the pathway protein modification; protein ubiquitination. Its function is as follows. Catalyzes the covalent attachment of ubiquitin to other proteins. In Caenorhabditis elegans, this protein is Probable ubiquitin-conjugating enzyme E2 7 (ubc-7).